A 302-amino-acid chain; its full sequence is 4-hydroxy-tetrahydrodipicolinate synthase (302 aa).

Thr-56 contacts pyruvate. The active-site Proton donor/acceptor is the Tyr-145. The Schiff-base intermediate with substrate role is filled by Lys-173. Val-215 lines the pyruvate pocket.

It belongs to the DapA family. As to quaternary structure, homotetramer; dimer of dimers.

The protein resides in the cytoplasm. The catalysed reaction is L-aspartate 4-semialdehyde + pyruvate = (2S,4S)-4-hydroxy-2,3,4,5-tetrahydrodipicolinate + H2O + H(+). Its pathway is amino-acid biosynthesis; L-lysine biosynthesis via DAP pathway; (S)-tetrahydrodipicolinate from L-aspartate: step 3/4. In terms of biological role, catalyzes the condensation of (S)-aspartate-beta-semialdehyde [(S)-ASA] and pyruvate to 4-hydroxy-tetrahydrodipicolinate (HTPA). This chain is 4-hydroxy-tetrahydrodipicolinate synthase, found in Prochlorococcus marinus (strain MIT 9515).